We begin with the raw amino-acid sequence, 738 residues long: Cleavage and polyadenylation specificity factor subunit 2 (738 aa).

The protein belongs to the metallo-beta-lactamase superfamily. RNA-metabolizing metallo-beta-lactamase-like family. CPSF2/YSH1 subfamily. In terms of assembly, CPSF is a heterotetramer composed of four distinct subunits 160, 100, 70 and 30 kDa.

The protein localises to the nucleus. In terms of biological role, CPSF plays a key role in pre-mRNA 3'-end formation, recognizing the AAUAAA signal sequence and interacting with poly(A)polymerase and other factors to bring about cleavage and poly(A) addition. This chain is Cleavage and polyadenylation specificity factor subunit 2, found in Oryza sativa subsp. japonica (Rice).